Here is a 213-residue protein sequence, read N- to C-terminus: NAD(P)H-hydrate epimerase (213 aa).

Residues 8 to 210 form the YjeF N-terminal domain; it reads MYNIEENGHA…KIGIPPEAEK (203 aa). (6S)-NADPHX is bound at residue 55-59; sequence NNGGD. K(+)-binding residues include asparagine 56 and aspartate 122. Residues 126–132, tyrosine 137, and aspartate 155 each bind (6S)-NADPHX; that span reads GTGITGE. Serine 158 lines the K(+) pocket.

The protein belongs to the NnrE/AIBP family. Requires K(+) as cofactor.

The catalysed reaction is (6R)-NADHX = (6S)-NADHX. The enzyme catalyses (6R)-NADPHX = (6S)-NADPHX. Catalyzes the epimerization of the S- and R-forms of NAD(P)HX, a damaged form of NAD(P)H that is a result of enzymatic or heat-dependent hydration. This is a prerequisite for the S-specific NAD(P)H-hydrate dehydratase to allow the repair of both epimers of NAD(P)HX. This chain is NAD(P)H-hydrate epimerase, found in Cenarchaeum symbiosum (strain A).